The primary structure comprises 437 residues: Bile acid CoA-transferase BaiK (437 aa).

Catalysis depends on Asp-171, which acts as the Nucleophile.

This sequence belongs to the CoA-transferase III family.

The enzyme catalyses deoxycholoyl-CoA + cholate = choloyl-CoA + deoxycholate. It catalyses the reaction allodeoxycholoyl-CoA + cholate = allodeoxycholate + choloyl-CoA. It carries out the reaction allocholate + deoxycholoyl-CoA = allocholoyl-CoA + deoxycholate. The catalysed reaction is allocholate + allodeoxycholoyl-CoA = allocholoyl-CoA + allodeoxycholate. The enzyme catalyses ursodeoxycholate + deoxycholoyl-CoA = ursodeoxycholoyl-CoA + deoxycholate. It catalyses the reaction allodeoxycholoyl-CoA + ursodeoxycholate = ursodeoxycholoyl-CoA + allodeoxycholate. The protein operates within lipid metabolism; bile acid biosynthesis. Its function is as follows. Functions in the bile acid 7alpha-dehydroxylation pathway, which forms secondary bile acids via the 7alpha-dehydroxylation of primary bile acids, and is carried out by intestinal anaerobic bacteria. Acts as a bile acid CoA transferase with broad bile acid substrate specificity. Catalyzes the transfer of the CoA moiety of secondary bile acid-CoA compounds to primary bile acids. Can use deoxycholoyl-CoA and allodeoxycholoyl-CoA as bile acid CoA donors and cholate, allocholate and ursodeoxycholate as bile acid CoA acceptors. Shows no activity when lithocholoyl-CoA is used as the CoA donor. This chain is Bile acid CoA-transferase BaiK, found in Clostridium scindens (strain JCM 10418 / VPI 12708).